Reading from the N-terminus, the 100-residue chain is NAD(P)H-quinone oxidoreductase subunit 4L, chloroplastic (100 aa).

The next 3 helical transmembrane spans lie at 1-21, 30-50, and 60-80; these read MLENSLILGAYLFCLGIYGLT, LMCLELMLNGVNINLVAFSSF, and VFAIFIIAIAAAEAAIGLAII.

This sequence belongs to the complex I subunit 4L family. NDH is composed of at least 16 different subunits, 5 of which are encoded in the nucleus.

It localises to the plastid. Its subcellular location is the chloroplast thylakoid membrane. The enzyme catalyses a plastoquinone + NADH + (n+1) H(+)(in) = a plastoquinol + NAD(+) + n H(+)(out). It carries out the reaction a plastoquinone + NADPH + (n+1) H(+)(in) = a plastoquinol + NADP(+) + n H(+)(out). Functionally, NDH shuttles electrons from NAD(P)H:plastoquinone, via FMN and iron-sulfur (Fe-S) centers, to quinones in the photosynthetic chain and possibly in a chloroplast respiratory chain. The immediate electron acceptor for the enzyme in this species is believed to be plastoquinone. Couples the redox reaction to proton translocation, and thus conserves the redox energy in a proton gradient. This chain is NAD(P)H-quinone oxidoreductase subunit 4L, chloroplastic, found in Staurastrum punctulatum (Green alga).